We begin with the raw amino-acid sequence, 368 residues long: Agmatine deiminase (368 aa).

Residue cysteine 357 is the Amidino-cysteine intermediate of the active site.

The protein belongs to the agmatine deiminase family. Homodimer.

The catalysed reaction is agmatine + H2O = N-carbamoylputrescine + NH4(+). Its pathway is amine and polyamine biosynthesis; putrescine biosynthesis via agmatine pathway; N-carbamoylputrescine from agmatine: step 1/1. Functionally, mediates the hydrolysis of agmatine into N-carbamoylputrescine in the arginine decarboxylase (ADC) pathway of putrescine biosynthesis, a basic polyamine. The chain is Agmatine deiminase from Pseudomonas aeruginosa (strain UCBPP-PA14).